The sequence spans 317 residues: Melanocyte-stimulating hormone receptor (317 aa).

Residues 1-37 (MPMQGAQRRLLGSLNSTPTATPNLGLAANHTGAPCLE) are Extracellular-facing. Residue asparagine 29 is glycosylated (N-linked (GlcNAc...) asparagine). The helical transmembrane segment at 38 to 63 (VSIPDGLFLSLGLVSLVENVLVVAAI) threads the bilayer. Residues 64 to 72 (AKNRNLHSP) are Cytoplasmic-facing. Residues 73–93 (MYCFICCLALSDLLVSGSNML) traverse the membrane as a helical segment. Topologically, residues 94–118 (EMAVILLLEAGALATRASVVQQLQN) are extracellular. The chain crosses the membrane as a helical span at residues 119–140 (TIDVLTCSSMLCSLCFLGAIAV). Over 141-163 (DRYVSIFYALRYHSIVTLPRARR) the chain is Cytoplasmic. A helical membrane pass occupies residues 164-183 (AIAAIWVASVLSSTLFIAYC). The Extracellular segment spans residues 184–191 (DHAAVLLC). The chain crosses the membrane as a helical span at residues 192-211 (LVVFFLAMLVLMAVLYVHML). Residues 212-240 (ARACQHAQGITRLHKRQLPAHQGFGLRGA) lie on the Cytoplasmic side of the membrane. The helical transmembrane segment at 241-266 (ATLTILLGIFFLCWGPFFLHLMLVVL) threads the bilayer. The Extracellular segment spans residues 267–279 (CPQHLTCSCIFKN). Residues 280 to 300 (FKVFLTLIICNTIIDPLIYAF) form a helical membrane-spanning segment. At 301-317 (RSQELCRTLREVLLCSW) the chain is on the cytoplasmic side. Cysteine 315 carries the S-palmitoyl cysteine lipid modification.

This sequence belongs to the G-protein coupled receptor 1 family. In terms of assembly, interacts with MGRN1, but does not undergo MGRN1-mediated ubiquitination; this interaction competes with GNAS-binding and thus inhibits agonist-induced cAMP production. Interacts with OPN3; the interaction results in a decrease in MC1R-mediated cAMP signaling and ultimately a decrease in melanin production in melanocytes.

It is found in the cell membrane. In terms of biological role, receptor for MSH (alpha, beta and gamma) and ACTH. The activity of this receptor is mediated by G proteins which activate adenylate cyclase. Mediates melanogenesis, the production of eumelanin (black/brown) and phaeomelanin (red/yellow), via regulation of cAMP signaling in melanocytes. In Alouatta pigra (Guatemalan howler monkey), this protein is Melanocyte-stimulating hormone receptor (MC1R).